Here is a 118-residue protein sequence, read N- to C-terminus: MTRVKRGNVARKRRKKVLKLAKGFRGSHAILFRTAKQQVLKALKYAYIGRKNRKRNYRSLWIVRINAAVRPYGITYNEFIKQLKNSSIALNRKMLSQLAILDHSVFKTILDSCTPGFK.

Belongs to the bacterial ribosomal protein bL20 family.

The protein localises to the plastid. It localises to the chloroplast. In terms of biological role, binds directly to 23S ribosomal RNA and is necessary for the in vitro assembly process of the 50S ribosomal subunit. It is not involved in the protein synthesizing functions of that subunit. This is Large ribosomal subunit protein bL20c from Gracilaria tenuistipitata var. liui (Red alga).